The chain runs to 577 residues: MDRAVSQVALENDEREAKNTWRLIFRIAILLLTVVTLATSVASLVYSMGASTPSDLVGIPTRISRAEEKITSALGSNQDVVDRIYKQVALESPLALLNTETTIMNAITSLSYQINGAANNSGWGAPIHDPDFIGGIGKELIVDDASDVTSFYPSAFQEHHNFIPAPTTGSGCIRIPSFDMSATHYCYTHNIISSGCRDHSHSYQYLALGVLRTSATGRIFFSTLRSINLDDTQNRKSCSVSATPLGCDMLCSKVTETEEEDYNSAVPTLMVHGRLGFDGQYHEKDLDVTTLFEDWVANYPGVGGGSFIDSRVWFSVYGGLKPNSPSDTVQEEKYVIYKRYNDTCPDEQDYQIRMAKSSYKPGRFGGKRIQQAILSIKVSTSLGEDPVLTVPPNTVTLMGAEGRILTVGTSHFLYQRGSSYFSPALLYPMTVSNKTATLHSPYTFNAFTRPGSIPCQASARCPNSCVTGVYTDPYPLIFYRNHTLRGVFGTMLDGEQARLNPASAVFDSTSRSRITRVSSSSTKAAYTTSTCFKVVKTNKTYCLSIAEISNTLFGEFRIVPLLVEILKNDGVREARSG.

Topologically, residues 1 to 26 are intravirion; the sequence is MDRAVSQVALENDEREAKNTWRLIFR. The helical transmembrane segment at 27-47 threads the bilayer; the sequence is IAILLLTVVTLATSVASLVYS. Residues 48–577 are Virion surface-facing; it reads MGASTPSDLV…NDGVREARSG (530 aa). N-linked (GlcNAc...) asparagine; by host glycosylation occurs at N119. The interval 124-152 is important for interaction with fusion/F protein; that stretch reads GAPIHDPDFIGGIGKELIVDDASDVTSFY. Cystine bridges form between C172-C196, C186-C247, and C238-C251. Positions 234-239 are involved in neuraminidase activity; that stretch reads NRKSCS. N-linked (GlcNAc...) asparagine; by host glycosylation is found at N341 and N433. 2 disulfide bridges follow: C344–C461 and C455–C465. N-linked (GlcNAc...) asparagine; by host glycosylation is found at N481 and N538. A disulfide bridge connects residues C531 and C542.

The protein belongs to the paramyxoviruses hemagglutinin-neuraminidase family. In terms of assembly, homotetramer; composed of disulfide-linked homodimers. Interacts with F protein trimer. Interacts with host CG-1B; this interaction inhibits viral adsorption and replication rather than internalization.

It is found in the virion membrane. The protein resides in the host cell membrane. It catalyses the reaction Hydrolysis of alpha-(2-&gt;3)-, alpha-(2-&gt;6)-, alpha-(2-&gt;8)- glycosidic linkages of terminal sialic acid residues in oligosaccharides, glycoproteins, glycolipids, colominic acid and synthetic substrates.. Mediates the viral entry into the host cell together with fusion/F protein. Attaches the virus to sialic acid-containing cell receptors and thereby initiates infection. Binding of HN protein to the receptor induces a conformational change that allows the F protein to trigger virion/cell membranes fusion. In terms of biological role, neuraminidase activity ensures the efficient spread of the virus by dissociating the mature virions from the neuraminic acid containing glycoproteins. The polypeptide is Hemagglutinin-neuraminidase (HN) (Gallus gallus (Chicken)).